The sequence spans 106 residues: MAQKKPKRNLSALKRHRQSLKRRLRNKAKKSAIKTLSKKAIQLAQEGKAEEALKIMRKAESLIDKAAKGSTLHKNAAARRKSRLMRKVRQLLEAAGAPLIGGGLSA.

Positions 1–32 are disordered; the sequence is MAQKKPKRNLSALKRHRQSLKRRLRNKAKKSA.

In terms of assembly, part of the 30S ribosomal subunit.

In terms of biological role, one of the primary rRNA binding proteins, it binds directly to 16S rRNA where it nucleates assembly of the bottom of the body of the 30S subunit, by binding to several RNA helices of the 16S rRNA. The chain is Small ribosomal subunit protein bS20 (rpsT) from Thermus thermophilus (strain ATCC 27634 / DSM 579 / HB8).